Reading from the N-terminus, the 247-residue chain is UDP-N-acetyl-D-mannosaminuronic acid transferase (247 aa).

The protein belongs to the glycosyltransferase 26 family.

It catalyses the reaction UDP-N-acetyl-alpha-D-mannosaminouronate + N-acetyl-alpha-D-glucosaminyl-di-trans,octa-cis-undecaprenyl diphosphate = beta-D-ManNAcA-(1-&gt;4)-alpha-D-GlcNAc-di-trans,octa-cis-undecaprenyl diphosphate + UDP + H(+). Its pathway is bacterial outer membrane biogenesis; enterobacterial common antigen biosynthesis. Its function is as follows. Catalyzes the synthesis of Und-PP-GlcNAc-ManNAcA (Lipid II), the second lipid-linked intermediate involved in enterobacterial common antigen (ECA) synthesis. In Enterobacter sp. (strain 638), this protein is UDP-N-acetyl-D-mannosaminuronic acid transferase.